A 104-amino-acid polypeptide reads, in one-letter code: Large ribosomal subunit protein uL24 (104 aa).

This sequence belongs to the universal ribosomal protein uL24 family. Part of the 50S ribosomal subunit.

Its function is as follows. One of two assembly initiator proteins, it binds directly to the 5'-end of the 23S rRNA, where it nucleates assembly of the 50S subunit. Functionally, one of the proteins that surrounds the polypeptide exit tunnel on the outside of the subunit. In Clostridium perfringens (strain SM101 / Type A), this protein is Large ribosomal subunit protein uL24.